Here is a 244-residue protein sequence, read N- to C-terminus: MATAGITAAIDDLVISRIDEAITNNTLVQRLRKKVSSLWKDYDAHVSDPTAHELLTMPAALADLPPPPPPTDDEINRSFYATALPSVVPTSDTLWGTASYEIIGRAVRIASSDKAPRLILHVTDETIRLEVPTMSFTLASPLSTGSLLRVTLPRGAIHSSLTGKFDERCWVRLLSTLTKWSTPSTMVTSDWTLDTTTGLTKPPVTGFNARATVKDSAIVMWFPAPDIATSARRAIVSPMSCVFE.

It belongs to the aquareoviridae NS3 protein family.

The chain is Non-structural protein 3 (S11) from Notemigonus crysoleucas (Golden shiner).